A 227-amino-acid polypeptide reads, in one-letter code: UPF0758 protein Psyc_1834 (227 aa).

One can recognise an MPN domain in the interval 102-224; the sequence is GLGRSQMVKD…TLSYAENCLA (123 aa). Positions 173, 175, and 186 each coordinate Zn(2+). The JAMM motif signature appears at 173-186; sequence HNHPHTDATPSTAD.

Belongs to the UPF0758 family.

This chain is UPF0758 protein Psyc_1834, found in Psychrobacter arcticus (strain DSM 17307 / VKM B-2377 / 273-4).